A 144-amino-acid polypeptide reads, in one-letter code: Large ribosomal subunit protein uL15 (144 aa).

The disordered stretch occupies residues 1–56; that stretch reads MELNNLKPAEGAKHAKRRVGRGIGSGLGKTAGRGHKGQKSRSGGFHKVGFEGGQMP. Positions 21–31 are enriched in gly residues; the sequence is RGIGSGLGKTA.

Belongs to the universal ribosomal protein uL15 family. In terms of assembly, part of the 50S ribosomal subunit.

Its function is as follows. Binds to the 23S rRNA. This Burkholderia mallei (strain NCTC 10247) protein is Large ribosomal subunit protein uL15.